The following is a 114-amino-acid chain: Adapter SH3BGRL (114 aa).

The interval 13 to 50 (STAIKKKQQDVLGFLEANKIGFEEKDIAANEENRKWMR) is required for interaction with HER2. A required for interaction with PFN1, HER2, and ATG12 region spans residues 54–71 (PENSRPATGYPLPPQIFN). Positions 61–67 (TGYPLPP) match the SH3-binding motif.

The protein belongs to the SH3BGR family. In terms of assembly, monomer. Interacts with PFN1/Profilin-1. Interacts with ERBB2. Interacts with ATG12. Interacts with BECN1. Interacts with translating ribosomes. As to expression, ubiquitous.

The protein resides in the cytoplasm. The protein localises to the cytosol. Its subcellular location is the cell membrane. In terms of biological role, appears to function as an adapter protein that bridges proteins together or proteins with mRNAs. May function as a ubiquitin ligase-substrate adapter. Additionally, associates with translating cytoplasmic ribosomes and may promote the expression of specific mRNAs. In Homo sapiens (Human), this protein is Adapter SH3BGRL.